Consider the following 413-residue polypeptide: GDP-mannose-dependent alpha-mannosyltransferase (413 aa).

It belongs to the glycosyltransferase group 1 family.

It functions in the pathway phospholipid metabolism; phosphatidylinositol metabolism. Its function is as follows. Catalyzes the addition of a mannose residue from GDP-D-mannose to GlcAGroAc2 to generate 1,2-di-O-C16/C18:1-(alpha-D-mannopyranosyl)-(1-4)-(alpha-D-glucopyranosyluronic acid)-(1-3)-glycerol(ManGlcAGroAc2). The protein is GDP-mannose-dependent alpha-mannosyltransferase (mgtA) of Corynebacterium glutamicum (strain ATCC 13032 / DSM 20300 / JCM 1318 / BCRC 11384 / CCUG 27702 / LMG 3730 / NBRC 12168 / NCIMB 10025 / NRRL B-2784 / 534).